A 463-amino-acid chain; its full sequence is Fumarate hydratase class II (463 aa).

Residues serine 98–threonine 100, histidine 129–aspartate 132, serine 139–asparagine 141, and threonine 187 each bind substrate. A disordered region spans residues lysine 121–asparagine 141. Residue histidine 188 is the Proton donor/acceptor of the active site. Residue serine 318 is part of the active site. Substrate-binding positions include serine 319 and lysine 324 to asparagine 326.

Belongs to the class-II fumarase/aspartase family. Fumarase subfamily. As to quaternary structure, homotetramer.

Its subcellular location is the cytoplasm. It catalyses the reaction (S)-malate = fumarate + H2O. The protein operates within carbohydrate metabolism; tricarboxylic acid cycle; (S)-malate from fumarate: step 1/1. Its function is as follows. Involved in the TCA cycle. Catalyzes the stereospecific interconversion of fumarate to L-malate. The chain is Fumarate hydratase class II from Rickettsia conorii (strain ATCC VR-613 / Malish 7).